The following is a 196-amino-acid chain: Interleukin-18 (196 aa).

A propeptide spanning residues Met-1 to Phe-29 is cleaved from the precursor.

Belongs to the IL-1 family. Forms a ternary complex with ligand-binding receptor subunit IL18R1 and signaling receptor subunit IL18RAP at the plasma membrane. Mature IL18 first binds to IL18R1 forming a low affinity binary complex, which then interacts with IL18RAP to form a high affinity ternary complex that signals inside the cell. Interacts with cargo receptor TMED10; the interaction mediates the translocation from the cytoplasm into the ERGIC (endoplasmic reticulum-Golgi intermediate compartment) and thereby secretion. In terms of processing, the pro-IL-18 precursor is processed by CASP1 or CASP4 to yield the active form.

The protein resides in the cytoplasm. It is found in the secreted. In terms of biological role, augments natural killer cell activity in spleen cells and stimulates interferon gamma production in T-helper type I cells. Involved in transduction of inflammation downstream of pyroptosis: its mature form is specifically released in the extracellular milieu by passing through the gasdermin-D (GSDMD) pore. This Gallus gallus (Chicken) protein is Interleukin-18 (IL18).